Consider the following 346-residue polypeptide: Methylthioribose-1-phosphate isomerase (346 aa).

Substrate is bound by residues 45–47 (RGA), R87, and Q194. D235 acts as the Proton donor in catalysis. 245–246 (NK) is a substrate binding site.

Belongs to the eIF-2B alpha/beta/delta subunits family. MtnA subfamily.

It carries out the reaction 5-(methylsulfanyl)-alpha-D-ribose 1-phosphate = 5-(methylsulfanyl)-D-ribulose 1-phosphate. The protein operates within amino-acid biosynthesis; L-methionine biosynthesis via salvage pathway; L-methionine from S-methyl-5-thio-alpha-D-ribose 1-phosphate: step 1/6. Its function is as follows. Catalyzes the interconversion of methylthioribose-1-phosphate (MTR-1-P) into methylthioribulose-1-phosphate (MTRu-1-P). In Syntrophomonas wolfei subsp. wolfei (strain DSM 2245B / Goettingen), this protein is Methylthioribose-1-phosphate isomerase.